The sequence spans 146 residues: Pseudoazurin (146 aa).

The signal sequence occupies residues 1-23; it reads MRNIAIKFAAAGILAMLAAPALA. The region spanning 28-116 is the Plastocyanin-like domain; that stretch reads VHMLNKGAEG…MGMIALIAVG (89 aa). Residues H63, C101, H104, and M109 each coordinate Cu cation.

Cu cation serves as cofactor.

It is found in the periplasm. Its function is as follows. This soluble electron transfer copper protein is required for the inactivation of copper-containing nitrite reductase in the presence of oxygen. Serves as a direct electron donor to the nitrite reductase. This chain is Pseudoazurin, found in Alcaligenes faecalis.